We begin with the raw amino-acid sequence, 585 residues long: Regulator of gene activity (585 aa).

Residues 42-56 (FQTDFANSYPGTANY) show a composition bias toward polar residues. 3 disordered regions span residues 42 to 93 (FQTD…GNRN), 148 to 191 (GGGG…PGSK), and 349 to 394 (GVGG…KVTN). The span at 58 to 71 (QAPQQQQQQQQQPQ) shows a compositional bias: low complexity. Over residues 166 to 184 (PSLTNARGQNDQTLPQSNP) the composition is skewed to polar residues. Gly residues predominate over residues 349-367 (GVGGGLGSGSGSSGSGAGG). Positions 372–388 (DNSSNDKLVKSGVQTSP) are enriched in polar residues.

Belongs to the CNOT2/3/5 family. In terms of assembly, component of the CCR4-NOT complex composed of at least Pop2/Caf1-55, Ccr4, Not1, Rga/Not2, and Not3. Expressed in heterogeneous levels between adjacent germline stem cells (at protein level).

The protein resides in the cytoplasm. Functionally, component of the CCR4-NOT complex which is one of the major cellular mRNA deadenylases and is linked to various cellular processes including bulk mRNA degradation, miRNA-mediated repression, translational repression during translational initiation and general transcription regulation. Additional complex functions may be a consequence of its influence on mRNA expression. Essential for viability. Acts as a suppressor of position effect variegation (PEV) at the white locus and regulates the expression of several unrelated genes. Plays a role in germline stem cell differentiation in the ovaries. The sequence is that of Regulator of gene activity from Drosophila melanogaster (Fruit fly).